A 387-amino-acid chain; its full sequence is Guanylate kinase 1 (387 aa).

The Guanylate kinase-like domain occupies 137–319 (EKPIVISGPS…CYKKLKNLLG (183 aa)). Residue 144–151 (GPSGVGKG) participates in ATP binding. Catalysis depends on residues R177, R270, and R281. 2 residues coordinate ATP: N304 and D305.

It belongs to the guanylate kinase family. As to quaternary structure, monomer.

The catalysed reaction is GMP + ATP = GDP + ADP. Essential for recycling GMP and indirectly, cGMP. Required for normal development of the gametophyte and embryo, in association with GK2. The protein is Guanylate kinase 1 (GK-1) of Arabidopsis thaliana (Mouse-ear cress).